We begin with the raw amino-acid sequence, 304 residues long: Protease HtpX homolog (304 aa).

A run of 2 helical transmembrane segments spans residues 14–34 and 39–59; these read VFII…IGII and YLNG…IMVM. His-144 serves as a coordination point for Zn(2+). Residue Glu-145 is part of the active site. Residue His-148 participates in Zn(2+) binding. 2 consecutive transmembrane segments (helical) span residues 159-179 and 202-222; these read IAIA…RLIF and IIIY…ATAI. Position 231 (Glu-231) interacts with Zn(2+). The interval 275–304 is disordered; that stretch reads SSPLKSKKDKPGLFDSHPPISSRIERLENM.

This sequence belongs to the peptidase M48B family. Requires Zn(2+) as cofactor.

The protein resides in the cell membrane. The chain is Protease HtpX homolog from Listeria innocua serovar 6a (strain ATCC BAA-680 / CLIP 11262).